The chain runs to 655 residues: p-hydroxybenzoic acid efflux pump subunit AaeB (655 aa).

The Periplasmic segment spans residues 1-12 (MGIFSIANQHIR). A helical transmembrane segment spans residues 13–33 (FAVKLATAIVLALFVGFHFQL). Topologically, residues 34–37 (ETPR) are cytoplasmic. Residues 38–58 (WAVLTAAIVAAGTAFAAGGEP) traverse the membrane as a helical segment. Topologically, residues 59-68 (YSGAIRYRGF) are periplasmic. The helical transmembrane segment at 69 to 89 (LRIIGTFIGCIAGLVIIIAMI) threads the bilayer. Topologically, residues 90–92 (RAP) are cytoplasmic. A helical transmembrane segment spans residues 93–113 (LLMILVCCIWAGFCTWISSLV). Over 114–120 (RIENSYA) the chain is Periplasmic. A helical membrane pass occupies residues 121–141 (WGLAGYTALIIVITIQPEPLL). Over 142–151 (TPQFAVERCS) the chain is Cytoplasmic. The helical transmembrane segment at 152 to 172 (EIVIGIVCAIMADLLFSPRSI) threads the bilayer. The Periplasmic segment spans residues 173-369 (KQEVDRELES…RTTLSCILGT (197 aa)). A helical membrane pass occupies residues 370-390 (LFWLWTGWTSGSGAMVMIAVV). The Cytoplasmic segment spans residues 391–406 (TSLAMRLPNPRMVAID). The chain crosses the membrane as a helical span at residues 407-427 (FIYGTLAALPLGLLYFLVIIP). The Periplasmic portion of the chain corresponds to 428–430 (NTQ). A helical transmembrane segment spans residues 431–451 (QSMLLLCISLAVLGFFLGIEV). Topologically, residues 452-458 (QKRRLGS) are cytoplasmic. Residues 459–479 (MGALASTINIIVLDNPMTFHF) traverse the membrane as a helical segment. Topologically, residues 480 to 481 (SQ) are periplasmic. The chain crosses the membrane as a helical span at residues 482-502 (FLDSALGQIVGCVLAFTVILL). Residues 503-655 (VRDKSRDRTG…HKYQHALTDS (153 aa)) are Cytoplasmic-facing.

It belongs to the aromatic acid exporter ArAE (TC 2.A.85) family.

Its subcellular location is the cell inner membrane. Forms an efflux pump with AaeA. Could function as a metabolic relief valve, allowing to eliminate certain compounds when they accumulate to high levels in the cell. Substrates are p-hydroxybenzoic acid (pHBA), 6-hydroxy-2-naphthoic and 2-hydroxycinnamate. The polypeptide is p-hydroxybenzoic acid efflux pump subunit AaeB (Escherichia coli (strain K12)).